The sequence spans 390 residues: Transforming protein cbl (390 aa).

A disordered region spans residues 1–52 (ASAGGGCRRGPSFSPGSIPSLAAERAPDPPLAMAGNVKKSSGAGGGGSGGSG). Residues 42–52 (GAGGGGSGGSG) are compositionally biased toward gly residues. The 4H stretch occupies residues 77 to 205 (PPCTVDKKMV…KGIFPSGLFQ (129 aa)). The region spanning 77-381 (PPCTVDKKMV…GRNQNPDLTG (305 aa)) is the Cbl-PTB domain. Residues 206–278 (GDTFRITKAD…FEFDIFTRLF (73 aa)) form an EF-hand-like region. Ca(2+)-binding residues include Asp-259, Thr-261, Asn-263, Tyr-265, and Glu-270. Positions 279–381 (QPWSSLLRNW…GRNQNPDLTG (103 aa)) are SH2-like. Arg-324 is a 4-O-phospho-L-tyrosine binding site.

In terms of biological role, induces early B-lineage lymphomas. In Mus musculus (Mouse), this protein is Transforming protein cbl (V-CBL).